The following is a 222-amino-acid chain: Gamma-glutamylcyclotransferase and putative RNase MJ0434 (222 aa).

The active site involves Arg75. An RX(4)HXY motif motif is present at residues 75–82 (RDILIRKY). Position 82 is an O-di-AMP-tyrosine (Tyr82).

This sequence in the N-terminal section; belongs to the HepT RNase toxin family. It in the C-terminal section; belongs to the gamma-glutamylcyclotransferase family. As to quaternary structure, homodimer, probably forms a complex with cognate antitoxin MJ0435. In terms of processing, modified by cognate antitoxin MJ0435; probably at least 2 successive AMPylation events occur on Tyr-82.

Probable toxic component of a putative type VII toxin-antitoxin (TA) system, probably an RNase. Probably neutralized by cognate antitoxin MJ0435. Neutralization may be due to AMPylation by MJ0435. The sequence is that of Gamma-glutamylcyclotransferase and putative RNase MJ0434 from Methanocaldococcus jannaschii (strain ATCC 43067 / DSM 2661 / JAL-1 / JCM 10045 / NBRC 100440) (Methanococcus jannaschii).